Reading from the N-terminus, the 532-residue chain is Monolignol oxidoreductase AtBBE-like 15 (532 aa).

The signal sequence occupies residues 1 to 27; it reads MAFAISKRNATLFLVTLLLISVPLSSS. A disulfide bridge links Cys-36 with Cys-100. The N-linked (GlcNAc...) asparagine glycan is linked to Asn-57. The region spanning 76–254 is the FAD-binding PCMH-type domain; the sequence is TPSNPKPVFI…LAWKIKLVPV (179 aa). A cross-link (6-(S-cysteinyl)-8alpha-(pros-histidyl)-FAD (His-Cys)) is located at residues 115 to 179; that stretch reads HDYEGLSFVA…QTHGFPAGLC (65 aa). Residues Asn-306 and Asn-431 are each glycosylated (N-linked (GlcNAc...) asparagine).

It belongs to the oxygen-dependent FAD-linked oxidoreductase family. It depends on FAD as a cofactor. In terms of processing, the FAD cofactor is bound via a bicovalent 6-S-cysteinyl, 8alpha-N1-histidyl FAD linkage. In terms of tissue distribution, expressed in sepals and stamen.

The protein resides in the secreted. Its subcellular location is the cell wall. It carries out the reaction (E)-4-coumaroyl alcohol + A = (E)-4-coumaraldehyde + AH2. It catalyses the reaction (E)-coniferol + A = (E)-coniferaldehyde + AH2. The enzyme catalyses (E)-sinapyl alcohol + A = (E)-sinapaldehyde + AH2. The catalysed reaction is 4-O-(beta-D-glucosyl)-(E)-coniferol + A = 4-O-(beta-D-glucosyl)-4-(E)-coniferyl aldehyde + AH2. Required for endosperm development and polar nuclei fusion. Mediates oxidation of p-hydroxylated derivatives of cinnamyl alcohol (i.e. the monolignols p-coumaryl-, coniferyl-, and sinapyl alcohol) to their corresponding aldehydes. Can also use the beta-O-glycosylated form of coniferyl alcohol (coniferin) as substrate, but is much less efficient towards cinnamyl alcohol. The electron acceptor required for these reactions is not known, but does not seem to be dioxygen. The sequence is that of Monolignol oxidoreductase AtBBE-like 15 from Arabidopsis thaliana (Mouse-ear cress).